A 152-amino-acid polypeptide reads, in one-letter code: SsrA-binding protein (152 aa).

The interval 122-152 (KGKKNHDKRETEAARDWQRDKARLMKGDRGD) is disordered. Residues 128-152 (DKRETEAARDWQRDKARLMKGDRGD) show a composition bias toward basic and acidic residues.

It belongs to the SmpB family.

It is found in the cytoplasm. Its function is as follows. Required for rescue of stalled ribosomes mediated by trans-translation. Binds to transfer-messenger RNA (tmRNA), required for stable association of tmRNA with ribosomes. tmRNA and SmpB together mimic tRNA shape, replacing the anticodon stem-loop with SmpB. tmRNA is encoded by the ssrA gene; the 2 termini fold to resemble tRNA(Ala) and it encodes a 'tag peptide', a short internal open reading frame. During trans-translation Ala-aminoacylated tmRNA acts like a tRNA, entering the A-site of stalled ribosomes, displacing the stalled mRNA. The ribosome then switches to translate the ORF on the tmRNA; the nascent peptide is terminated with the 'tag peptide' encoded by the tmRNA and targeted for degradation. The ribosome is freed to recommence translation, which seems to be the essential function of trans-translation. This is SsrA-binding protein from Caulobacter sp. (strain K31).